Consider the following 216-residue polypeptide: 2-hydroxy-3-keto-5-methylthiopentenyl-1-phosphate phosphatase (216 aa).

Belongs to the HAD-like hydrolase superfamily. MtnX family.

The catalysed reaction is 2-hydroxy-5-methylsulfanyl-3-oxopent-1-enyl phosphate + H2O = 1,2-dihydroxy-5-(methylsulfanyl)pent-1-en-3-one + phosphate. The protein operates within amino-acid biosynthesis; L-methionine biosynthesis via salvage pathway; L-methionine from S-methyl-5-thio-alpha-D-ribose 1-phosphate: step 4/6. Dephosphorylates 2-hydroxy-3-keto-5-methylthiopentenyl-1-phosphate (HK-MTPenyl-1-P) yielding 1,2-dihydroxy-3-keto-5-methylthiopentene (DHK-MTPene). In Exiguobacterium sp. (strain ATCC BAA-1283 / AT1b), this protein is 2-hydroxy-3-keto-5-methylthiopentenyl-1-phosphate phosphatase.